The primary structure comprises 78 residues: uncharacterized protein (78 aa).

2 consecutive transmembrane segments (helical) span residues 12–32 (LVSVMGMGMVFAFLLLLICVV) and 51–71 (GVGAAVPAGGALAAAIAVAVH).

The protein localises to the cell membrane. This is an uncharacterized protein from Treponema pallidum (strain Nichols).